We begin with the raw amino-acid sequence, 252 residues long: MANLGCWMLFLFVATWSDLGLCKKRPKPGGWNTGGSRYPGQGSPGGNRYPPQGGGWGQPHGGGWGQPHGGGWGQPHGGGWGQPHGGGWGQGGGTHSQWNKPSKPKTNMKHVAGAAAAGAVVGGLGGYMLGSAMSRPLIHFGNDYEDRYYRENMYRYPNQVYYRPVDQYNNQNNFVHDCVNITIKQHTVTTTTKGENFTETDVKMMERVVEQMCITQYEKESQAYYQRGSSMVLFSSPPVILLISFLIFLIVG.

A signal peptide spans 1–22 (MANLGCWMLFLFVATWSDLGLC). Residues 23 to 38 (KKRPKPGGWNTGGSRY) form an interaction with ADGRG6 region. Residues 23 to 229 (KKRPKPGGWN…ESQAYYQRGS (207 aa)) form an interaction with GRB2, ERI3 and SYN1 region. Residues 26 to 106 (PKPGGWNTGG…QWNKPSKPKT (81 aa)) are disordered. 5 tandem repeats follow at residues 51 to 58 (PQGGGWGQ), 59 to 66 (PHGGGWGQ), 67 to 74 (PHGGGWGQ), 75 to 82 (PHGGGWGQ), and 83 to 90 (PHGGGWGQ). The 5 X 8 AA tandem repeats of P-H-G-G-G-W-G-Q stretch occupies residues 51 to 90 (PQGGGWGQPHGGGWGQPHGGGWGQPHGGGWGQPHGGGWGQ). Over residues 52 to 94 (QGGGWGQPHGGGWGQPHGGGWGQPHGGGWGQPHGGGWGQGGGT) the composition is skewed to gly residues. His60, Gly61, Gly62, His68, Gly69, Gly70, His76, Gly77, Gly78, His84, Gly85, and Gly86 together coordinate Cu(2+). Cysteines 178 and 213 form a disulfide. Asn180 and Asn196 each carry an N-linked (GlcNAc...) asparagine glycan. Ser229 is lipidated: GPI-anchor amidated serine. Positions 230–252 (SMVLFSSPPVILLISFLIFLIVG) are cleaved as a propeptide — removed in mature form.

The protein belongs to the prion family. In terms of assembly, monomer and homodimer. Has a tendency to aggregate into amyloid fibrils containing a cross-beta spine, formed by a steric zipper of superposed beta-strands. Soluble oligomers may represent an intermediate stage on the path to fibril formation. Copper binding may promote oligomerization. Interacts with GRB2, APP, ERI3/PRNPIP and SYN1. Mislocalized cytosolically exposed PrP interacts with MGRN1; this interaction alters MGRN1 subcellular location and causes lysosomal enlargement. Interacts with APP. Interacts with KIAA1191. Interacts with ADGRG6.

It is found in the cell membrane. The protein resides in the golgi apparatus. In terms of biological role, its primary physiological function is unclear. May play a role in neuronal development and synaptic plasticity. May be required for neuronal myelin sheath maintenance. May promote myelin homeostasis through acting as an agonist for ADGRG6 receptor. May play a role in iron uptake and iron homeostasis. Soluble oligomers are toxic to cultured neuroblastoma cells and induce apoptosis (in vitro). Association with GPC1 (via its heparan sulfate chains) targets PRNP to lipid rafts. Also provides Cu(2+) or Zn(2+) for the ascorbate-mediated GPC1 deaminase degradation of its heparan sulfate side chains. This chain is Major prion protein (PRNP), found in Callithrix jacchus (White-tufted-ear marmoset).